The chain runs to 765 residues: Ankyrin repeat and protein kinase domain-containing protein 1 (765 aa).

A Protein kinase domain is found at 22-289 (EGDWRLVASG…DITIETDILL (268 aa)). ATP contacts are provided by residues 28–36 (VASGGFSQV) and Lys51. Catalysis depends on Asp145, which acts as the Proton acceptor. ANK repeat units lie at residues 361–390 (NKVTPLHFLVAQGSVEQVRLLLAHEVDVDC), 394–423 (SGYTPLLIAAQDQQPDLCALLLAHGADANR), 427–456 (DGWAPLHFAAQNGDDGTARLLLDHGACVDA), 460–489 (EGWTPLHLAAQNNFENVARLLVSRQADPNL), 493–522 (EGKTPLHVAAYFGHVSLVKLLTSQGAELDA), 526–555 (NLRTPLHLAVERGKVRAIQHLLKSGAVPDA), 559–588 (SGYGPLHTAAARGKYLICKMLLRYGASLEL), 592–621 (QGWTPLHLAAYKGHLEIIHLLAESHANMGA), 625–654 (VNWTPLHLAARHGEEAVVSALLQCGADPNA), 658–687 (SGWTPLHLAVQRSTFLSVINLLEHHANVHA), 691–720 (VGWTPAHLAALKGNTAILKVLVEAGAQLDV), and 724–753 (VSCTPLQLALRSRKQGIMSFLEGKEPSVAT).

Belongs to the protein kinase superfamily. TKL Ser/Thr protein kinase family. In terms of tissue distribution, highly expressed in brain and weakly expressed in placenta and spinal cord.

It catalyses the reaction L-seryl-[protein] + ATP = O-phospho-L-seryl-[protein] + ADP + H(+). The enzyme catalyses L-threonyl-[protein] + ATP = O-phospho-L-threonyl-[protein] + ADP + H(+). This Homo sapiens (Human) protein is Ankyrin repeat and protein kinase domain-containing protein 1 (ANKK1).